The chain runs to 92 residues: Small ribosomal subunit protein uS17 (92 aa).

This sequence belongs to the universal ribosomal protein uS17 family. As to quaternary structure, part of the 30S ribosomal subunit.

One of the primary rRNA binding proteins, it binds specifically to the 5'-end of 16S ribosomal RNA. This chain is Small ribosomal subunit protein uS17, found in Corynebacterium glutamicum (strain ATCC 13032 / DSM 20300 / JCM 1318 / BCRC 11384 / CCUG 27702 / LMG 3730 / NBRC 12168 / NCIMB 10025 / NRRL B-2784 / 534).